The following is a 273-amino-acid chain: Aegyptin (273 aa).

Residues 1–19 (MKPLVKLFLLFCLVGIVLS) form the signal peptide. Residues 20–160 (RPMPEDEEPV…SEKNDPADTY (141 aa)) form a disordered region. Residues 24–62 (EDEEPVAEGGDDDASGESEGEEETTDDAGGDGGEEENEG) are compositionally biased toward acidic residues. Positions 63 to 86 (EEHAGDKDAGGEDTGKEENTGHDD) are enriched in basic and acidic residues. Positions 87 to 145 (AGEEDAGEEDAGEEDAGEEDAGEEDAEKEEGEKEDAGDDAGSDDGEEDSTGGDEGEDNA) are enriched in acidic residues. Positions 137–273 (GGDEGEDNAE…IKSCVSSKGR (137 aa)) are mediates binding of host collagen. Residues 146-158 (EDSKGSEKNDPAD) are compositionally biased toward basic and acidic residues. 2 disulfide bridges follow: Cys-213–Cys-267 and Cys-235–Cys-245.

The protein belongs to the aegyptin family. As to quaternary structure, monomer; exhibits non-globular elongated shape in solution. In terms of tissue distribution, female saliva (at protein level). Adult female salivary gland (at protein level).

It localises to the secreted. Functionally, modulates blood feeding of female mosquitoes on vertebrate hosts. Inhibits collagen-induced platelet aggregation in the host via preventing collagen interaction with its three major ligands: glycoprotein VI, integrin alpha-2/beta-1 (ITGA2/ITGB1) and von Willebrand factor (VWF). Prevents collagen-mediated thrombus formation in the host. Binds to host collagens but not to laminin, vitronectin (VTN), fibronectin (FN1), von Willebrand factor (VWF) and fibrinogen. Influences cytokine production and populations of circulating leukocytes. (Microbial infection) Reduces replication of dengue virus type 2 at inoculation site and viremia levels on day 2 post-inoculation. Promotes production of pro-inflammatory cytokines, such as GM-CSF (CSF2), IFN-gamma (IFNG), IL5 and IL6, in the lymph nodes of mice infected with dengue virus type 2. Increases the number of circulating eosinophils in mice infected with dengue virus type 2. Decreases the number of circulating monocytes in mice infected with dengue virus type 2. This Aedes aegypti (Yellowfever mosquito) protein is Aegyptin.